The sequence spans 482 residues: ATP synthase subunit beta (482 aa).

162–169 (GGAGVGKT) lines the ATP pocket.

This sequence belongs to the ATPase alpha/beta chains family. In terms of assembly, F-type ATPases have 2 components, CF(1) - the catalytic core - and CF(0) - the membrane proton channel. CF(1) has five subunits: alpha(3), beta(3), gamma(1), delta(1), epsilon(1). CF(0) has four main subunits: a(1), b(1), b'(1) and c(9-12).

It localises to the cellular thylakoid membrane. It carries out the reaction ATP + H2O + 4 H(+)(in) = ADP + phosphate + 5 H(+)(out). Functionally, produces ATP from ADP in the presence of a proton gradient across the membrane. The catalytic sites are hosted primarily by the beta subunits. This chain is ATP synthase subunit beta, found in Trichormus variabilis (strain ATCC 29413 / PCC 7937) (Anabaena variabilis).